The primary structure comprises 444 residues: Endoglucanase N (444 aa).

An N-terminal signal peptide occupies residues Met1–Ser31. Substrate contacts are provided by residues His64, Trp68 to Phe69, Tyr95, and His130. Glu168 (proton donor) is an active-site residue. A substrate-binding site is contributed by Tyr230. Glu256 (nucleophile) is an active-site residue. Substrate is bound by residues Ala262–Ser263, Trp290, and Lys295–Glu297. Residues Ala332–Gly358 are disordered. Over residues Thr339–Gly358 the composition is skewed to low complexity. Positions Thr356 to Thr444 constitute a CBM3 domain.

Belongs to the glycosyl hydrolase 5 (cellulase A) family.

Its subcellular location is the secreted. It catalyses the reaction Endohydrolysis of (1-&gt;4)-beta-D-glucosidic linkages in cellulose, lichenin and cereal beta-D-glucans.. This Pectobacterium atrosepticum (Erwinia carotovora subsp. atroseptica) protein is Endoglucanase N (celN).